A 131-amino-acid chain; its full sequence is Putative protein PTGES3L (131 aa).

Positions 3 to 91 (RQPARTLWYD…KEKVAWPRLT (89 aa)) constitute a CS domain.

Belongs to the p23/wos2 family.

In Mus musculus (Mouse), this protein is Putative protein PTGES3L (Ptges3l).